A 226-amino-acid polypeptide reads, in one-letter code: ATP-dependent dethiobiotin synthetase BioD (226 aa).

Residue 12 to 17 (GIGKTV) participates in ATP binding. A Mg(2+)-binding site is contributed by T16. The active site involves K37. T41 is a binding site for substrate. ATP-binding positions include D49, 108–111 (EGAG), and 197–199 (PAG). Mg(2+) is bound by residues D49 and E108.

It belongs to the dethiobiotin synthetase family. Homodimer. Mg(2+) serves as cofactor.

The protein localises to the cytoplasm. It carries out the reaction (7R,8S)-7,8-diammoniononanoate + CO2 + ATP = (4R,5S)-dethiobiotin + ADP + phosphate + 3 H(+). It participates in cofactor biosynthesis; biotin biosynthesis; biotin from 7,8-diaminononanoate: step 1/2. In terms of biological role, catalyzes a mechanistically unusual reaction, the ATP-dependent insertion of CO2 between the N7 and N8 nitrogen atoms of 7,8-diaminopelargonic acid (DAPA, also called 7,8-diammoniononanoate) to form a ureido ring. This is ATP-dependent dethiobiotin synthetase BioD from Mycolicibacterium vanbaalenii (strain DSM 7251 / JCM 13017 / BCRC 16820 / KCTC 9966 / NRRL B-24157 / PYR-1) (Mycobacterium vanbaalenii).